The following is a 136-amino-acid chain: Large ribosomal subunit protein uL16 (136 aa).

This sequence belongs to the universal ribosomal protein uL16 family. As to quaternary structure, part of the 50S ribosomal subunit.

Its function is as follows. Binds 23S rRNA and is also seen to make contacts with the A and possibly P site tRNAs. This is Large ribosomal subunit protein uL16 from Bradyrhizobium diazoefficiens (strain JCM 10833 / BCRC 13528 / IAM 13628 / NBRC 14792 / USDA 110).